We begin with the raw amino-acid sequence, 180 residues long: uncharacterized protein (180 aa).

In terms of domain architecture, N-acetyltransferase spans 45–180 (FVFSQVRTLD…GNRCAFWYAN (136 aa)).

Belongs to the acetyltransferase family. Ycf52 subfamily.

This is an uncharacterized protein from Prochlorococcus marinus (strain SARG / CCMP1375 / SS120).